Consider the following 815-residue polypeptide: Lon protease 1 (815 aa).

Positions Ile14–Leu211 constitute a Lon N-terminal domain. Gly370–Thr377 is a binding site for ATP. In terms of domain architecture, Lon proteolytic spans Thr606 to Ala787. Catalysis depends on residues Ser693 and Lys736.

This sequence belongs to the peptidase S16 family. In terms of assembly, homohexamer. Organized in a ring with a central cavity.

The protein localises to the cytoplasm. It carries out the reaction Hydrolysis of proteins in presence of ATP.. In terms of biological role, ATP-dependent serine protease that mediates the selective degradation of mutant and abnormal proteins as well as certain short-lived regulatory proteins. Required for cellular homeostasis and for survival from DNA damage and developmental changes induced by stress. Degrades polypeptides processively to yield small peptide fragments that are 5 to 10 amino acids long. Binds to DNA in a double-stranded, site-specific manner. In Herpetosiphon aurantiacus (strain ATCC 23779 / DSM 785 / 114-95), this protein is Lon protease 1.